A 570-amino-acid chain; its full sequence is Structure-specific endonuclease subunit EME1 (570 aa).

Positions Met1–Ser12 are enriched in low complexity. The segment at Met1–Glu42 is disordered. A phosphoserine mark is found at Ser12 and Ser15. Over residues Leu26–Glu42 the composition is skewed to basic and acidic residues. Ser84, Ser85, and Ser87 each carry phosphoserine. Lys103 participates in a covalent cross-link: Glycyl lysine isopeptide (Lys-Gly) (interchain with G-Cter in SUMO2). Phosphoserine occurs at positions 111 and 117. Residues Lys136 and Lys141 each participate in a glycyl lysine isopeptide (Lys-Gly) (interchain with G-Cter in SUMO2) cross-link. The residue at position 150 (Thr150) is a Phosphothreonine. Disordered stretches follow at residues Lys187–Asn233 and Ala372–Gly400. Over residues Arg220–Asn233 the composition is skewed to basic and acidic residues. The nuclease-like domain; forms the post-nick DNA binding interface and is involved in DNA recognition and bending stretch occupies residues Lys250–Thr456. The segment at Arg476–Asp570 is helix-hairpin-helix (2HhH); forms the pre-nick DNA binding interface and is involved in DNA recognition and bending.

It belongs to the EME1/MMS4 family. As to quaternary structure, part of the heterodimeric MUS81-EME1 complex.

The protein resides in the nucleus. The protein localises to the nucleolus. In terms of biological role, non-catalytic subunit of the structure-specific, heterodimeric DNA endonuclease MUS81-EME1 which is involved in the maintenance of genome stability. In the complex, EME1 is required for DNA cleavage, participating in DNA recognition and bending. MUS81-EME1 cleaves 3'-flaps and nicked Holliday junctions, and exhibit limited endonuclease activity with 5' flaps and nicked double-stranded DNAs. Active during prometaphase, MUS81-EME1 resolves mitotic recombination intermediates, including Holliday junctions, which form during homologous recombination. This is Structure-specific endonuclease subunit EME1 from Homo sapiens (Human).